Reading from the N-terminus, the 154-residue chain is Jupiter microtubule associated homolog 1 (154 aa).

M1 carries the post-translational modification N-acetylmethionine. Residues 1–19 (MTTTTTFKGVDPNSRNSSR) are compositionally biased toward polar residues. The disordered stretch occupies residues 1–154 (MTTTTTFKGV…PGGKSSLVLG (154 aa)). An N-acetylthreonine; in Hematological and neurological expressed 1 protein, N-terminally processed modification is found at T2. Residues S28 and S31 each carry the phosphoserine modification. A Phosphothreonine modification is found at T54. 5 positions are modified to phosphoserine: S71, S80, S87, S88, and S92. The segment covering 80–91 (SGPQRRNSSEAN) has biased composition (polar residues). The span at 96 to 108 (LDLKGEGDVHENV) shows a compositional bias: basic and acidic residues. Pro residues predominate over residues 125 to 138 (PAAPVPSPVAPAPV). S131 carries the phosphoserine modification. K148 carries the post-translational modification N6-acetyllysine.

This sequence belongs to the JUPITER family. In terms of assembly, interacts with the complex composed, at least, of APC, CTNNB1 and GSK3B; the interaction takes place with the inactive form of GSK3B (phosphorylated at 'Ser-9').

The protein resides in the nucleus. The protein localises to the cytoplasm. In terms of biological role, modulates negatively AKT-mediated GSK3B signaling. Induces CTNNB1 'Ser-33' phosphorylation and degradation through the suppression of the inhibitory 'Ser-9' phosphorylation of GSK3B, which represses the function of the APC:CTNNB1:GSK3B complex and the interaction with CDH1/E-cadherin in adherent junctions. Plays a role in the regulation of cell cycle and cell adhesion. Has an inhibitory role on AR-signaling pathway through the induction of receptor proteasomal degradation. In Bos taurus (Bovine), this protein is Jupiter microtubule associated homolog 1.